The chain runs to 421 residues: Testin (421 aa).

A PET domain is found at Met92–Asp199. The tract at residues Glu133–Cys164 is disordered. The segment covering Pro155 to Cys164 has biased composition (basic and acidic residues). LIM zinc-binding domains lie at Tyr234–Glu297, Pro299–Val359, and Gln362–Ser421.

It belongs to the prickle / espinas / testin family. In terms of assembly, interacts via LIM domain 1 with ZYX. Interacts (via LIM domain 3) with ENAH and VASP. Interacts with ALKBH4, talin, actin, alpha-actinin, GRIP1 and PXN. Interacts (via LIM domain 2) with ACTL7A (via N-terminus). Heterodimer with ACTL7A; the heterodimer interacts with ENAH to form a heterotrimer.

It is found in the cytoplasm. Its subcellular location is the cell junction. It localises to the focal adhesion. Functionally, scaffold protein that may play a role in cell adhesion, cell spreading and in the reorganization of the actin cytoskeleton. Plays a role in the regulation of cell proliferation. May act as a tumor suppressor. The protein is Testin (TES) of Callithrix jacchus (White-tufted-ear marmoset).